The primary structure comprises 206 residues: Dihydrofolate reductase (206 aa).

Positions 6–204 constitute a DHFR domain; sequence SLTLIVALTT…FDYEFEMWTR (199 aa). Residues Ala12 and 18 to 24 each bind NADP(+); that span reads GIGRSNS. 32–37 provides a ligand contact to substrate; that stretch reads EISYFK. Residue 59-61 participates in NADP(+) binding; the sequence is RKT. Arg75 contacts substrate. NADP(+) is bound by residues 81 to 83 and 124 to 131; these read TRN and GGAQLYKA.

Belongs to the dihydrofolate reductase family.

The catalysed reaction is (6S)-5,6,7,8-tetrahydrofolate + NADP(+) = 7,8-dihydrofolate + NADPH + H(+). It functions in the pathway cofactor biosynthesis; tetrahydrofolate biosynthesis; 5,6,7,8-tetrahydrofolate from 7,8-dihydrofolate: step 1/1. Its function is as follows. Key enzyme in folate metabolism. Catalyzes an essential reaction for de novo glycine and purine synthesis, and for DNA precursor synthesis. The chain is Dihydrofolate reductase from Pneumocystis carinii.